A 595-amino-acid polypeptide reads, in one-letter code: Sorting nexin-9 (595 aa).

Residues 1–62 (MATKARVMYD…PTDYVEILPN (62 aa)) form the SH3 domain. Residues 89 to 100 (QTNSSSANSNNQ) show a composition bias toward low complexity. Residues 89-199 (QTNSSSANSN…QRGNSRAGAS (111 aa)) form a disordered region. Serine 121 bears the Phosphoserine mark. The span at 129–144 (TDGTSAQRNSSANNWD) shows a compositional bias: polar residues. The span at 159–169 (GDDDEWDEDWD) shows a compositional bias: acidic residues. Position 200 is a phosphoserine (serine 200). Residues 201-213 (MKLPLNKFPGFAK) are critical for tubulation activity. Tyrosine 239 carries the phosphotyrosine modification. The region spanning 250 to 360 (FDCVVADPRK…QQFLNFRDEK (111 aa)) is the PX domain. Residues arginine 286, lysine 288, and arginine 327 each contribute to the a 1,2-diacyl-sn-glycero-3-phospho-(1D-myo-inositol-4,5-bisphosphate) site. Lysine 288 carries the post-translational modification N6-acetyllysine. The 204-residue stretch at 392–595 (LIEIEQKCDA…RQALSRFPVM (204 aa)) folds into the BAR domain.

It belongs to the sorting nexin family. In terms of assembly, homodimer, and homooligomer. Heterodimer with SNX18. Interacts with ITCH. Interacts (via SH3 domain) with TNK2, WASL and ACTR3. Identified in a complex with TNK2 and clathrin heavy chains. Identified in a complex with the AP-2 complex, clathrin and DNM2. Interacts (via SH3 domain) with DNM1 and DNM2. Identified in an oligomeric complex containing DNM1 and SNX9. Interacts with FCHSD1. Interacts with ADAM9 and ADAM15 cytoplasmic tails. Post-translationally, phosphorylated on tyrosine residues by TNK2. Phosphorylation promotes its activity in the degradation of EGFR. In terms of processing, ubiquitinated by ITCH. Detected in inner ear vestibula and in the cuticular plate of cochlear hair cells (at protein level).

The protein resides in the cytoplasmic vesicle membrane. The protein localises to the cell membrane. It is found in the cytoplasmic vesicle. It localises to the clathrin-coated vesicle. Its subcellular location is the golgi apparatus. The protein resides in the trans-Golgi network. The protein localises to the cell projection. It is found in the ruffle. It localises to the cytoplasm. Involved in endocytosis and intracellular vesicle trafficking, both during interphase and at the end of mitosis. Required for efficient progress through mitosis and cytokinesis. Required for normal formation of the cleavage furrow at the end of mitosis. Plays a role in endocytosis via clathrin-coated pits, but also clathrin-independent, actin-dependent fluid-phase endocytosis. Plays a role in macropinocytosis. Promotes internalization of TNFR. Promotes degradation of EGFR after EGF signaling. Stimulates the GTPase activity of DNM1. Promotes DNM1 oligomerization. Promotes activation of the Arp2/3 complex by WASL, and thereby plays a role in the reorganization of the F-actin cytoskeleton. Binds to membranes enriched in phosphatidylinositol 4,5-bisphosphate and promotes membrane tubulation. Has lower affinity for membranes enriched in phosphatidylinositol 3-phosphate. The protein is Sorting nexin-9 (Snx9) of Mus musculus (Mouse).